Consider the following 1024-residue polypeptide: MRNFSDILLSQDWQNPHIVKWHCRTPHVPLHSYRTEQEARLDVGGNRQSLNGQWRFALFEKPEAVEPAVIDPDFDDSAWAHIPVPSNWQMQGFDKPIYTNIQYPFADRPPYVPQDNPTGCYRHRFTLEKQALTESIRIVFDGVNSAFHLWCNGHWVGYSQDSRLPAEFELTPYLQEGENLLVAMVLRWSDGSYLEDQDMWWLSGIFRDVYLYRKPILAIEDFFIRTELDALYQHAELRVETRLSQVTRHHQVQVALFDAQGECVARSQALHTGQRVVDEKGAWHDKTEHSLAICSPTLWSDEAPYLYRCVICLLDEDGAPIEFESAAVGFRKVEITQGLLKLNGQPLLIRGVNRHEHHPELGHVMDEASMRRDIELMKQHNFNAVRTAHYPNHPRWYELCDEYGLYVVDEANLETHGQFPMSRLSNDPQWVNAYLQRMIGMVERDKNHPCVIIWSLGNESGIGTNHHAMYQWTKQRDPSRPVQYEGGGANTAATDIVCPMYARVDQHQPHPAVPKYALKNWISLPQENRPLILCEYAHAMGNSLGAFYKYWQAFREFPRLQGGFIWDWVDQGISKWDSEGRHYWGYGGDFGDTINDRQFCINGLLFPDRTPHPALHEVKKVQQPYQFSLSYPKLTIHNERLFAALPLELVVSVLCDGQEIKQERLPLDIAPRGTITLDLASLPMLPEHEYHLNAVLLCREDQPWSNAGHCIASEQWCLQPRRSMLPKITHAPLPQWQQDGDKVRIEAANQQWQFNRQTGLLEQWWQNGQPVLSEPLRDNFYRAVLDNDIGTSEAQHLDPNSWIARWHAAGLDKLRVECDDLRVTTLNESVEVVIDVAHYHQQALALRTRWRYQIFGDARVELNVEVMLCSDLPPLPRVGLTLALPVAENPVSWFGRGPHENYPDRLQSAHVGRYTATVDELHTPYIFPSENGLRCDTRQLQVGALVVEGHFHFSLSRYSQTMLDKAKHSNELVAGDKWYLNLDAQHMGVGGDDSWSQSVHPEFLLTQPHYQYQLTLRVKASSPQ.

Substrate contacts are provided by asparagine 100 and aspartate 198. Aspartate 198 is a Na(+) binding site. Residues glutamate 414, histidine 416, and glutamate 459 each coordinate Mg(2+). Substrate contacts are provided by residues glutamate 459 and 535 to 538 (EYAH). Glutamate 459 acts as the Proton donor in catalysis. The Nucleophile role is filled by glutamate 535. Residue asparagine 595 participates in Mg(2+) binding. Positions 599 and 602 each coordinate Na(+). Substrate contacts are provided by asparagine 602 and tryptophan 995.

Belongs to the glycosyl hydrolase 2 family. As to quaternary structure, homotetramer. Mg(2+) is required as a cofactor. The cofactor is Na(+).

It catalyses the reaction Hydrolysis of terminal non-reducing beta-D-galactose residues in beta-D-galactosides.. The polypeptide is Beta-galactosidase (Vibrio cholerae serotype O1 (strain ATCC 39541 / Classical Ogawa 395 / O395)).